Reading from the N-terminus, the 276-residue chain is UPF0276 protein PA4106 (276 aa).

This sequence belongs to the UPF0276 family.

The sequence is that of UPF0276 protein PA4106 from Pseudomonas aeruginosa (strain ATCC 15692 / DSM 22644 / CIP 104116 / JCM 14847 / LMG 12228 / 1C / PRS 101 / PAO1).